The chain runs to 674 residues: Probable L-type lectin-domain containing receptor kinase I.5 (674 aa).

Residues 1–22 form the signal peptide; sequence MSKGLFLIWLISSFHLISFSTS. Residues 23–286 lie on the Extracellular side of the membrane; it reads SKDTSFVFNG…RPRAEHKKVQ (264 aa). Residues 25–258 form a legume-lectin like region; the sequence is DTSFVFNGFG…YHYLLGWSFS (234 aa). Residues Asn-124, Asn-181, Asn-185, Asn-204, and Asn-225 are each glycosylated (N-linked (GlcNAc...) asparagine). A helical membrane pass occupies residues 287–307; the sequence is FALIIALPVILAIVVMAVLAG. Over 308–674 the chain is Cytoplasmic; the sequence is VYYHRKKKYA…DHEQPLEFKS (367 aa). Residues 344 to 625 enclose the Protein kinase domain; that stretch reads FHKDRFLGRG…LPLPDFSPYT (282 aa). Residues 350-358 and Lys-372 each bind ATP; that span reads LGRGGFGEV. Asp-468 functions as the Proton acceptor in the catalytic mechanism. Residues 649-662 are compositionally biased toward low complexity; sequence NWSAPSASSSSANN. The tract at residues 649–674 is disordered; that stretch reads NWSAPSASSSSANNSKDHEQPLEFKS. The span at 663–674 shows a compositional bias: basic and acidic residues; that stretch reads SKDHEQPLEFKS.

It in the C-terminal section; belongs to the protein kinase superfamily. Ser/Thr protein kinase family. This sequence in the N-terminal section; belongs to the leguminous lectin family.

It localises to the cell membrane. The catalysed reaction is L-seryl-[protein] + ATP = O-phospho-L-seryl-[protein] + ADP + H(+). The enzyme catalyses L-threonyl-[protein] + ATP = O-phospho-L-threonyl-[protein] + ADP + H(+). This chain is Probable L-type lectin-domain containing receptor kinase I.5 (LECRK15), found in Arabidopsis thaliana (Mouse-ear cress).